A 147-amino-acid chain; its full sequence is CLAVATA3/ESR (CLE)-related protein 4C (147 aa).

The signal sequence occupies residues Met1–Ala21. The interval Ala21–Met83 is required for secretion from the host cytoplasm to the host apoplasm. Asn32 carries N-linked (GlcNAc...) asparagine glycosylation. Disordered regions lie at residues Gly57–Pro86 and Arg116–His147. Positions His125–Val137 are enriched in basic and acidic residues. The short motif at Arg136–His147 is the CLE element.

It belongs to the CLV3/ESR signal peptide family. As to expression, highly expressed exclusively within the dorsal esophageal gland cell during syncytium formation in host plants.

The protein resides in the secreted. It localises to the host cytoplasm. Its subcellular location is the host extracellular space. The protein localises to the extracellular space. It is found in the apoplast. Mimics host plant CLE extracellular signal peptides that regulate cell fate. May play a role in the differentiation or division of feeding cells (syncytia) induced in plant roots during infection. This chain is CLAVATA3/ESR (CLE)-related protein 4C (CLE-4C), found in Globodera rostochiensis (Golden nematode worm).